The sequence spans 252 residues: 2-succinyl-6-hydroxy-2,4-cyclohexadiene-1-carboxylate synthase (252 aa).

It belongs to the AB hydrolase superfamily. MenH family. In terms of assembly, monomer.

The enzyme catalyses 5-enolpyruvoyl-6-hydroxy-2-succinyl-cyclohex-3-ene-1-carboxylate = (1R,6R)-6-hydroxy-2-succinyl-cyclohexa-2,4-diene-1-carboxylate + pyruvate. The protein operates within quinol/quinone metabolism; 1,4-dihydroxy-2-naphthoate biosynthesis; 1,4-dihydroxy-2-naphthoate from chorismate: step 3/7. Its pathway is quinol/quinone metabolism; menaquinone biosynthesis. In terms of biological role, catalyzes a proton abstraction reaction that results in 2,5-elimination of pyruvate from 2-succinyl-5-enolpyruvyl-6-hydroxy-3-cyclohexene-1-carboxylate (SEPHCHC) and the formation of 2-succinyl-6-hydroxy-2,4-cyclohexadiene-1-carboxylate (SHCHC). In Shigella boydii serotype 4 (strain Sb227), this protein is 2-succinyl-6-hydroxy-2,4-cyclohexadiene-1-carboxylate synthase.